The chain runs to 126 residues: Probable prefoldin subunit 4 (126 aa).

It belongs to the prefoldin subunit beta family. Heterohexamer of two PFD-alpha type and four PFD-beta type subunits.

In terms of biological role, binds specifically to cytosolic chaperonin (c-CPN) and transfers target proteins to it. Binds to nascent polypeptide chain and promotes folding in an environment in which there are many competing pathways for nonnative proteins. Appears to play a non-essential role. The polypeptide is Probable prefoldin subunit 4 (Caenorhabditis briggsae).